The sequence spans 348 residues: D-alanine--D-alanine ligase (348 aa).

Residues 132-334 (KRVLESAGIP…YAELIEELVR (203 aa)) enclose the ATP-grasp domain. 162 to 217 (EAALSYPVFVKPANMGSSVGISKAESEEELRAAILLALTYDSRILIEQGVLAREIE) contributes to the ATP binding site. Residues D288, E301, and N303 each contribute to the Mg(2+) site.

This sequence belongs to the D-alanine--D-alanine ligase family. It depends on Mg(2+) as a cofactor. Requires Mn(2+) as cofactor.

It is found in the cytoplasm. It carries out the reaction 2 D-alanine + ATP = D-alanyl-D-alanine + ADP + phosphate + H(+). It participates in cell wall biogenesis; peptidoglycan biosynthesis. Functionally, cell wall formation. In Streptococcus equi subsp. zooepidemicus (strain H70), this protein is D-alanine--D-alanine ligase.